The sequence spans 75 residues: Nigwaprin-a (75 aa).

The signal sequence occupies residues 1-24; that stretch reads MSSGGLLLLLGLLTLWAELTPVSG. Residues 27–72 enclose the WAP domain; that stretch reads RPVKPGLCPPRPQKPPCVKECKNDWSCRGEQKCCRYGCIYECRDPI. Cystine bridges form between Cys-34–Cys-60, Cys-43–Cys-64, Cys-47–Cys-59, and Cys-53–Cys-68.

The protein belongs to the venom waprin family. Expressed by the venom gland.

It is found in the secreted. Damages membranes of susceptible bacteria. Has no hemolytic activity. Not toxic to mice. Does not inhibit the proteinases elastase and cathepsin G. The protein is Nigwaprin-a of Cryptophis nigrescens (Eastern small-eyed snake).